We begin with the raw amino-acid sequence, 513 residues long: ATP synthase subunit alpha (513 aa).

169–176 (GDRQTGKT) is an ATP binding site.

This sequence belongs to the ATPase alpha/beta chains family. In terms of assembly, F-type ATPases have 2 components, CF(1) - the catalytic core - and CF(0) - the membrane proton channel. CF(1) has five subunits: alpha(3), beta(3), gamma(1), delta(1), epsilon(1). CF(0) has three main subunits: a(1), b(2) and c(9-12). The alpha and beta chains form an alternating ring which encloses part of the gamma chain. CF(1) is attached to CF(0) by a central stalk formed by the gamma and epsilon chains, while a peripheral stalk is formed by the delta and b chains.

Its subcellular location is the cell inner membrane. The catalysed reaction is ATP + H2O + 4 H(+)(in) = ADP + phosphate + 5 H(+)(out). Functionally, produces ATP from ADP in the presence of a proton gradient across the membrane. The alpha chain is a regulatory subunit. This chain is ATP synthase subunit alpha, found in Bordetella bronchiseptica (strain ATCC BAA-588 / NCTC 13252 / RB50) (Alcaligenes bronchisepticus).